The chain runs to 208 residues: Small ribosomal subunit protein uS4 (208 aa).

One can recognise an S4 RNA-binding domain in the interval 98–160 (RRIDNTVYRL…SRQLQMINEA (63 aa)).

This sequence belongs to the universal ribosomal protein uS4 family. As to quaternary structure, part of the 30S ribosomal subunit. Contacts protein S5. The interaction surface between S4 and S5 is involved in control of translational fidelity.

Functionally, one of the primary rRNA binding proteins, it binds directly to 16S rRNA where it nucleates assembly of the body of the 30S subunit. In terms of biological role, with S5 and S12 plays an important role in translational accuracy. In Syntrophobacter fumaroxidans (strain DSM 10017 / MPOB), this protein is Small ribosomal subunit protein uS4.